The primary structure comprises 491 residues: Cobyric acid synthase (491 aa).

A GATase cobBQ-type domain is found at 253-429; that stretch reads ARRVAVIRLP…WHGALEGDEL (177 aa). Residue Cys334 is the Nucleophile of the active site. Residue His421 is part of the active site.

It belongs to the CobB/CobQ family. CobQ subfamily.

It functions in the pathway cofactor biosynthesis; adenosylcobalamin biosynthesis. Catalyzes amidations at positions B, D, E, and G on adenosylcobyrinic A,C-diamide. NH(2) groups are provided by glutamine, and one molecule of ATP is hydrogenolyzed for each amidation. The sequence is that of Cobyric acid synthase from Mycolicibacterium gilvum (strain PYR-GCK) (Mycobacterium gilvum (strain PYR-GCK)).